We begin with the raw amino-acid sequence, 240 residues long: 1-(5-phosphoribosyl)-5-[(5-phosphoribosylamino)methylideneamino] imidazole-4-carboxamide isomerase (240 aa).

Asp8 (proton acceptor) is an active-site residue. Residue Asp129 is the Proton donor of the active site.

This sequence belongs to the HisA/HisF family.

Its subcellular location is the cytoplasm. The catalysed reaction is 1-(5-phospho-beta-D-ribosyl)-5-[(5-phospho-beta-D-ribosylamino)methylideneamino]imidazole-4-carboxamide = 5-[(5-phospho-1-deoxy-D-ribulos-1-ylimino)methylamino]-1-(5-phospho-beta-D-ribosyl)imidazole-4-carboxamide. Its pathway is amino-acid biosynthesis; L-histidine biosynthesis; L-histidine from 5-phospho-alpha-D-ribose 1-diphosphate: step 4/9. This chain is 1-(5-phosphoribosyl)-5-[(5-phosphoribosylamino)methylideneamino] imidazole-4-carboxamide isomerase, found in Listeria welshimeri serovar 6b (strain ATCC 35897 / DSM 20650 / CCUG 15529 / CIP 8149 / NCTC 11857 / SLCC 5334 / V8).